The chain runs to 103 residues: Co-chaperonin GroES (103 aa).

Belongs to the GroES chaperonin family. In terms of assembly, heptamer of 7 subunits arranged in a ring. Interacts with the chaperonin GroEL.

The protein localises to the cytoplasm. Together with the chaperonin GroEL, plays an essential role in assisting protein folding. The GroEL-GroES system forms a nano-cage that allows encapsulation of the non-native substrate proteins and provides a physical environment optimized to promote and accelerate protein folding. GroES binds to the apical surface of the GroEL ring, thereby capping the opening of the GroEL channel. This is Co-chaperonin GroES from Synechococcus sp. (strain CC9311).